Reading from the N-terminus, the 165-residue chain is UPF0303 protein Bamb_1459 (165 aa).

This sequence belongs to the UPF0303 family.

The protein is UPF0303 protein Bamb_1459 of Burkholderia ambifaria (strain ATCC BAA-244 / DSM 16087 / CCUG 44356 / LMG 19182 / AMMD) (Burkholderia cepacia (strain AMMD)).